The following is a 1693-amino-acid chain: MEAHQFIKAPGITTAIEQAALAAANSALANAVVVRPFLSHQQIEILINLMQPRQLVFRPEVFWNHPIQRVIHNELELYCRARSGRCLEIGAHPRSINDNPNVVHRCFLRPVGRDVQRWYTAPTRGPAANCRRSALRGLPAADRTYCLDGFSGCNFPAETGIALYSLHDMSPSDVAEAMFRHGMTRLYAALHLPPEVLLPPGTYRTASYLLIHDGRRVVVTYEGDTSAGYNHDVSNLRSWIRTTKVTGDHPLVIERVRAIGCHFVLLLTAAPEPSPMPYVPYPRSTEVYVRSIFGPGGTPSLFPTSCSTKSTFHAVPAHIWDRLMLFGATLDDQAFCCSRLMTYLRGISYKVTVGTLVANEGWNASEDALTAVITAAYLTICHQRYLRTQAISKGMRRLEREHAQKFITRLYSWLFEKSGRDYIPGRQLEFYAQCRRWLSAGFHLDPRVLVFDESAPCHCRTAIRKALSKFCCFMKWLGQECTCFLQPAEGAVGDQGHDNEAYEGSDVDPAESAISDISGSYVVPGTALQPLYQALDLPAEIVARAGRLTATVKVSQVDGRIDCETLLGNKTFRTSFVDGAVLETNGPERHNLSFDASQSTMAAGPFSLTYAASAAGLEVRYVAAGLDHRAVFAPGVSPRSAPGEVTAFCSALYRFNREAQRHSLIGNLWFHPEGLIGLFAPFSPGHVWESANPFCGESTLYTRTWSEVDAVSSPARPDLGFMSEPSIPSRAATPTLAAPLPPPAPDPSPPPSAPALAEPASGATAGAPAITHQTARHRRLLFTYPDGSKVFAGSLFESTCTWLVNASNVDHRPGGGLCHAFYQRYPASFDAASFVMRDGAAAYTLTPRPIIHAVAPDYRLEHNPKRLEAAYRETCSRLGTAAYPLLGTGIYQVPIGPSFDAWERNHRPGDELYLPELAARWFEANRPTRPTLTITEDVARTANLAIELDSATDVGRACAGCRVTPGVVQYQFTAGVPGSGKSRSITQADVDVVVVPTRELRNAWRRRGFAAFTPHTAARVTQGRRVVIDEAPSLPPHLLLLHMQRAATVHLLGDPNQIPAIDFEHAGLVPAIRPDLGPTSWWHVTHRWPADVCELIRGAYPMIQTTSRVLRSLFWGEPAVGQKLVFTQAAKPANPGSVTVHEAQGATYTETTIIATADARGLIQSSRAHAIVALTRHTEKCVIIDAPGLLREVGISDAIVNNFFLAGGEIGHQRPSVIPRGNPDANVDTLAAFPPSCQISAFHQLAEELGHRPVPVAAVLPPCPELEQGLLYLPQELTTCDSVVTFELTDIVHCRMAAPSQRKAVLSTLVGRYGGRTKLYNASHSDVRDSLARFIPAIGPVQVTTCELYELVEAMVEKGQDGSAVLELDLCNRDVSRITFFQKDCNKFTTGETIAHGKVGQGISAWSKTFCALFGPWFRAIEKAILALLPQGVFYGDAFDDTVFSAAVAAAKASMVFENDFSEFDSTQNNFSLGLECAIMEECGMPQWLIRLYHLIRSAWILQAPKESLRGFWKKHSGEPGTLLWNTVWNMAVITHCYDFRDFQVAAFKGDDSIVLCSEYRQSPGAAVLIAGCGLKLKVDFRPIGLYAGVVVAPGLGALPDVVRFAGRLTEKNWGPGPERAEQLRLAVSDFLRKLTNVAQMCVDVVSRVYGVSPGLVHNLIGMLQAVADGKAHFTESVKPVLDLTNSILCRVE.

Positions 56–240 (VFRPEVFWNH…HDVSNLRSWI (185 aa)) constitute an Alphavirus-like MT domain. The methyltransferase stretch occupies residues 60 to 240 (EVFWNHPIQR…HDVSNLRSWI (181 aa)). Residues 241-439 (RTTKVTGDHP…FYAQCRRWLS (199 aa)) are Y-domain. Residues Cys-434 and Cys-481 are joined by a disulfide bond. The interval 442–509 (FHLDPRVLVF…EAYEGSDVDP (68 aa)) is putative protease. The tract at residues 510–691 (AESAISDISG…FSPGHVWESA (182 aa)) is zinc-binding. His-671, Glu-673, and His-686 together coordinate Zn(2+). Positions 712–778 (SSPARPDLGF…AITHQTARHR (67 aa)) are hinge. The tract at residues 732-768 (ATPTLAAPLPPPAPDPSPPPSAPALAEPASGATAGAP) is disordered. Residues 739 to 753 (PLPPPAPDPSPPPSA) are compositionally biased toward pro residues. The span at 754–768 (PALAEPASGATAGAP) shows a compositional bias: low complexity. Residues 775–921 (ARHRRLLFTY…LYLPELAARW (147 aa)) enclose the Macro domain. The X-domain stretch occupies residues 785-942 (PDGSKVFAGS…TITEDVARTA (158 aa)). The region spanning 934 to 1082 (ITEDVARTAN…RPDLGPTSWW (149 aa)) is the (+)RNA virus helicase ATP-binding domain. An NTPase/helicase region spans residues 960–1204 (GCRVTPGVVQ…ISDAIVNNFF (245 aa)). ATP is bound at residue 975 to 982 (GVPGSGKS). The 134-residue stretch at 1083 to 1216 (HVTHRWPADV…GGEIGHQRPS (134 aa)) folds into the (+)RNA virus helicase C-terminal domain. Residues 1207–1693 (GGEIGHQRPS…LTNSILCRVE (487 aa)) form an RNA-directed RNA polymerase region. One can recognise a RdRp catalytic domain in the interval 1454–1565 (SMVFENDFSE…LCSEYRQSPG (112 aa)).

It belongs to the hepevirus non-structural polyprotein family. As to quaternary structure, the protease domain interacts with host EIF2AK4 (via C-terminus); this interaction inhibits dimerization of EIF2AK4 and prevents EIF2AK4-mediated phosphorylation of host EIF2A. The cofactor is Mg(2+). ORF1 polyprotein does not seem to be processed into distinct enzymatic domains by a viral protease belonging to ORF1, but could be processed by a host serine protease like thrombin.

The protein localises to the host cytoplasm. Its subcellular location is the host perinuclear region. The catalysed reaction is RNA(n) + a ribonucleoside 5'-triphosphate = RNA(n+1) + diphosphate. It carries out the reaction GTP + S-adenosyl-L-methionine = N(7)-methyl-GTP + S-adenosyl-L-homocysteine. Putative protease: Inhibited by chymostatin. In terms of biological role, methyltransferase: Displays a capping enzyme activity. This function is necessary since all viral RNAs are synthesized in the cytoplasm, and host capping enzymes are restricted to the nucleus. The enzymatic reaction involves a covalent link between 7-methyl-GMP and the methyltransferase, whereas eukaryotic capping enzymes form a covalent complex only with GMP. Methyltransferase catalyzes transfer of a methyl group from S-adenosylmethionine to GTP and GDP to yield m(7)GTP or m(7)GDP. GDP is a better substrate than GTP. This enzyme also displays guanylyltransferase activity to form a covalent complex, methyltransferase-m(7)GMP, from which 7-methyl-GMP is transferred to the mRNA to create the cap structure. Y-domain: Indispensable for virus replication. Functionally, putative protease: The putative protease domain although necessary for replication of the virus may not be a protease but rather a structural Zn(2+)-binding domain. Inhibits induction of IFN-beta by MDA5 and RIG-I pathways and down-regulates the expression of MDA5. Its function is as follows. NTPase/helicase: Multi-functional protein that exhibits NTPase and RNA unwinding activities. Hydrolyzes all NTPs efficiently and unwinds RNA duplexes containing 5' overhangs. Possesses a sequence independent RNA-5'-triphosphatase (RTPase) activity suggestive of its role in forming viral cap structure. Also participates in viral genome replication, RNA translocation and genome packaging/unpackaging. In terms of biological role, RNA-directed RNA polymerase: Plays an essential role in the virus replication. Binds to the 3'-end of the genomic RNA to initiate viral replication. This Homo sapiens (Human) protein is Non-structural polyprotein pORF1.